A 66-amino-acid polypeptide reads, in one-letter code: Large ribosomal subunit protein bL33c (66 aa).

This sequence belongs to the bacterial ribosomal protein bL33 family.

The protein localises to the plastid. It localises to the chloroplast. The protein is Large ribosomal subunit protein bL33c of Platanus occidentalis (Sycamore).